A 199-amino-acid polypeptide reads, in one-letter code: Recombination protein RecR (199 aa).

The C4-type zinc-finger motif lies at cysteine 57–cysteine 72. The Toprim domain occupies arginine 80–proline 175.

Belongs to the RecR family.

Functionally, may play a role in DNA repair. It seems to be involved in an RecBC-independent recombinational process of DNA repair. It may act with RecF and RecO. The protein is Recombination protein RecR of Carboxydothermus hydrogenoformans (strain ATCC BAA-161 / DSM 6008 / Z-2901).